The chain runs to 199 residues: Protein MM_0484 (199 aa).

The 192-residue stretch at 5 to 196 (TEGRAAVKLA…EKEPDGEVIE (192 aa)) folds into the AMMECR1 domain.

The polypeptide is Protein MM_0484 (Methanosarcina mazei (strain ATCC BAA-159 / DSM 3647 / Goe1 / Go1 / JCM 11833 / OCM 88) (Methanosarcina frisia)).